The sequence spans 218 residues: Eukaryotic translation initiation factor 3 subunit K (218 aa).

The 162-residue stretch at 44–205 (YDWGANLAVL…NIKTKNITEK (162 aa)) folds into the PCI domain.

This sequence belongs to the eIF-3 subunit K family. In terms of assembly, component of the eukaryotic translation initiation factor 3 (eIF-3) complex.

The protein localises to the cytoplasm. In terms of biological role, component of the eukaryotic translation initiation factor 3 (eIF-3) complex, which is involved in protein synthesis of a specialized repertoire of mRNAs and, together with other initiation factors, stimulates binding of mRNA and methionyl-tRNAi to the 40S ribosome. The eIF-3 complex specifically targets and initiates translation of a subset of mRNAs involved in cell proliferation. This chain is Eukaryotic translation initiation factor 3 subunit K, found in Bombyx mori (Silk moth).